A 417-amino-acid chain; its full sequence is MDSEKENPASPTTGREEEIPGSSPEGVYPADEDHIFHEDQAPLRVESAKHEEEIVEQQQQQPEDLEQGDMIVEDGDQQFMNMVQITQEDMYEAGFDVEAGFELNHLTEEQLNIVVAISQQRQAKQNEQEHNEEVVIEDGSHHHMVHHEMIENQFEGDGNGPEEEYDGNGQIIDNAMHIILTNDGGVNITSKQKQFYVSPSEIANLNIDLNNLSTENVHQLVQLALPPIKEKAQDSAYNDQAPSTSYHHHHHEQLEAGKSTRSPIIGETVQIRTADGRLQDAVVKYVRGDSEYKIQLMNGEFAYATIDQMLVPQRDRSDHEYQQVAPPVLLRRTDMASVRNAAQKRSANDDLCPPVLKKSYQLAPVVDGPHLVHTPNFCCPICDKKVYQKEPSYIVIRLPACDSCTREKIIVLDEQSS.

Disordered stretches follow at residues 1–41 (MDSE…EDQA) and 233–262 (QDSA…STRS). A compositionally biased stretch (basic and acidic residues) spans 31-41 (DEDHIFHEDQA). The span at 235-245 (SAYNDQAPSTS) shows a compositional bias: polar residues.

This is an uncharacterized protein from Caenorhabditis elegans.